The primary structure comprises 290 residues: Cilia- and flagella-associated protein 298 (290 aa).

It belongs to the CFAP298 family. In terms of assembly, interacts with dnaaf1/swt. Interacts with lrrc6/sea. Interacts with dvl (via DEP and PDZ domains). Strongly expressed in ciliated tissues of the embryonic trunk, including the pronephric ducts and spinal canal.

It is found in the cytoplasm. The protein localises to the cytoskeleton. It localises to the cilium basal body. Functionally, plays a role in motile cilium function, possibly by acting on outer dynein arm assembly. Seems to be important for initiation rather than maintenance of cilium motility. Required for correct positioning of cilia at the apical cell surface, suggesting an additional role in the planar cell polarity (PCP) pathway. May suppress canonical Wnt signaling activity. The polypeptide is Cilia- and flagella-associated protein 298 (Danio rerio (Zebrafish)).